The sequence spans 278 residues: Urease accessory protein UreD (278 aa).

Belongs to the UreD family. As to quaternary structure, ureD, UreF and UreG form a complex that acts as a GTP-hydrolysis-dependent molecular chaperone, activating the urease apoprotein by helping to assemble the nickel containing metallocenter of UreC. The UreE protein probably delivers the nickel.

The protein localises to the cytoplasm. In terms of biological role, required for maturation of urease via the functional incorporation of the urease nickel metallocenter. The chain is Urease accessory protein UreD from Staphylococcus aureus (strain bovine RF122 / ET3-1).